Consider the following 396-residue polypeptide: Actin-related protein 6 (396 aa).

An N-acetylthreonine modification is found at Thr2. Lys260 carries the N6-acetyllysine modification.

Belongs to the actin family. ARP6 subfamily. Component of the chromatin-remodeling SRCAP complex composed of at least SRCAP, DMAP1, RUVBL1, RUVBL2, ACTL6A, YEATS4, ACTR6 and ZNHIT1. Interacts with CBX1, CBX3 and CBX5.

The protein resides in the cytoplasm. Its subcellular location is the cytoskeleton. It localises to the nucleus. It is found in the nucleolus. Functionally, required for formation and/or maintenance of proper nucleolar structure and function. Plays a dual role in the regulation of ribosomal DNA (rDNA) transcription. In the presence of high glucose, maintains active rDNA transcription through H2A.Z deposition and under glucose starvation, is required for the repression of rDNA transcription, and this function may be independent of H2A.Z. The polypeptide is Actin-related protein 6 (Actr6) (Mus musculus (Mouse)).